The chain runs to 214 residues: 7-cyano-7-deazaguanine synthase (214 aa).

10–20 (FSGGQDSTTCL) serves as a coordination point for ATP. 4 residues coordinate Zn(2+): Cys-184, Cys-193, Cys-196, and Cys-199.

It belongs to the QueC family. As to quaternary structure, homodimer. The cofactor is Zn(2+).

The catalysed reaction is 7-carboxy-7-deazaguanine + NH4(+) + ATP = 7-cyano-7-deazaguanine + ADP + phosphate + H2O + H(+). It functions in the pathway purine metabolism; 7-cyano-7-deazaguanine biosynthesis. Its function is as follows. Catalyzes the ATP-dependent conversion of 7-carboxy-7-deazaguanine (CDG) to 7-cyano-7-deazaguanine (preQ(0)). This Exiguobacterium sp. (strain ATCC BAA-1283 / AT1b) protein is 7-cyano-7-deazaguanine synthase.